The chain runs to 862 residues: Protein translocase subunit SecA (862 aa).

ATP contacts are provided by residues Q88, 106-110 (GEGKT), and D506. Zn(2+) contacts are provided by C839, C841, C850, and H851.

The protein belongs to the SecA family. As to quaternary structure, monomer and homodimer. Part of the essential Sec protein translocation apparatus which comprises SecA, SecYEG and auxiliary proteins SecDF-YajC and YidC. The cofactor is Zn(2+).

Its subcellular location is the cell inner membrane. It is found in the cytoplasm. It catalyses the reaction ATP + H2O + cellular proteinSide 1 = ADP + phosphate + cellular proteinSide 2.. Its function is as follows. Part of the Sec protein translocase complex. Interacts with the SecYEG preprotein conducting channel. Has a central role in coupling the hydrolysis of ATP to the transfer of proteins into and across the cell membrane, serving as an ATP-driven molecular motor driving the stepwise translocation of polypeptide chains across the membrane. This chain is Protein translocase subunit SecA, found in Campylobacter jejuni subsp. doylei (strain ATCC BAA-1458 / RM4099 / 269.97).